A 153-amino-acid polypeptide reads, in one-letter code: Ribosome maturation factor RimP (153 aa).

It belongs to the RimP family.

It is found in the cytoplasm. Functionally, required for maturation of 30S ribosomal subunits. The sequence is that of Ribosome maturation factor RimP from Solibacter usitatus (strain Ellin6076).